The sequence spans 104 residues: Acetylcholine receptor subunit alpha (104 aa).

At 1-104 (NPPAIFKSYC…YFIVNVIIPC (104 aa)) the chain is on the extracellular side. Cystine bridges form between C10–C24 and C74–C75. N-linked (GlcNAc...) asparagine glycosylation is present at N23.

The protein belongs to the ligand-gated ion channel (TC 1.A.9) family. Acetylcholine receptor (TC 1.A.9.1) subfamily. Alpha-1/CHRNA1 sub-subfamily. As to quaternary structure, one of the alpha chains that assemble within the acetylcholine receptor, a pentamer of two alpha chains, a beta, a delta, and a gamma or epsilon chains.

It is found in the postsynaptic cell membrane. Its subcellular location is the cell membrane. The enzyme catalyses K(+)(in) = K(+)(out). It carries out the reaction Na(+)(in) = Na(+)(out). Its function is as follows. Upon acetylcholine binding, the AChR responds by an extensive change in conformation that affects all subunits and leads to opening of an ion-conducting channel across the plasma membrane. The chain is Acetylcholine receptor subunit alpha (CHRNA1) from Naja naja (Indian cobra).